The chain runs to 128 residues: Ribonuclease pancreatic (128 aa).

Over residues 1 to 13 (GESRAEKFQRQHM) the composition is skewed to basic and acidic residues. The segment at 1-24 (GESRAEKFQRQHMDSGSSPSSSST) is disordered. Positions 7 and 10 each coordinate substrate. Histidine 12 acts as the Proton acceptor in catalysis. Disulfide bonds link cysteine 26–cysteine 84, cysteine 40–cysteine 95, cysteine 58–cysteine 110, and cysteine 65–cysteine 72. A glycan (N-linked (GlcNAc...) asparagine) is linked at asparagine 34. Substrate is bound by residues 41 to 45 (KSVNT), lysine 66, and arginine 85. The active-site Proton donor is histidine 119.

It belongs to the pancreatic ribonuclease family. In terms of assembly, monomer. Interacts with and forms tight 1:1 complexes with RNH1. Dimerization of two such complexes may occur. Interaction with RNH1 inhibits this protein. Pancreas and other tissues and body fluids (indicating it may have other physiological functions besides its role in digestion).

The protein localises to the secreted. The enzyme catalyses an [RNA] containing cytidine + H2O = an [RNA]-3'-cytidine-3'-phosphate + a 5'-hydroxy-ribonucleotide-3'-[RNA].. It catalyses the reaction an [RNA] containing uridine + H2O = an [RNA]-3'-uridine-3'-phosphate + a 5'-hydroxy-ribonucleotide-3'-[RNA].. Its function is as follows. Endonuclease that catalyzes the cleavage of RNA on the 3' side of pyrimidine nucleotides. Acts on single-stranded and double-stranded RNA. The protein is Ribonuclease pancreatic (RNASE1) of Semnopithecus entellus (Northern plains gray langur).